Here is a 448-residue protein sequence, read N- to C-terminus: Signal recognition particle 54 kDa protein (448 aa).

Residues Gly107–Thr114, Asp189–Arg193, and Thr247–Asp250 each bind GTP.

This sequence belongs to the GTP-binding SRP family. SRP54 subfamily. In terms of assembly, part of the signal recognition particle protein translocation system, which is composed of SRP and FtsY. Archaeal SRP consists of a 7S RNA molecule of 300 nucleotides and two protein subunits: SRP54 and SRP19.

The protein resides in the cytoplasm. It carries out the reaction GTP + H2O = GDP + phosphate + H(+). Its function is as follows. Involved in targeting and insertion of nascent membrane proteins into the cytoplasmic membrane. Binds to the hydrophobic signal sequence of the ribosome-nascent chain (RNC) as it emerges from the ribosomes. The SRP-RNC complex is then targeted to the cytoplasmic membrane where it interacts with the SRP receptor FtsY. The chain is Signal recognition particle 54 kDa protein from Thermococcus kodakarensis (strain ATCC BAA-918 / JCM 12380 / KOD1) (Pyrococcus kodakaraensis (strain KOD1)).